We begin with the raw amino-acid sequence, 102 residues long: Thioredoxin (102 aa).

Residues 1 to 102 (MVKIISSENF…FLTNLINKHA (102 aa)) enclose the Thioredoxin domain. Cys28 and Cys31 are joined by a disulfide.

This sequence belongs to the thioredoxin family.

Its function is as follows. Participates in various redox reactions through the reversible oxidation of its active center dithiol to a disulfide and catalyzes dithiol-disulfide exchange reactions. The sequence is that of Thioredoxin (trxA) from Chlamydia pneumoniae (Chlamydophila pneumoniae).